The following is a 91-amino-acid chain: MELSRVLDNEVKLRNAIYLLMSIVNDTAVPRNIRRAATEALNYLRDERYTPGVRAANAVGVLDQVSQDPNMPLSARTKVWQVIAILETIHD.

It belongs to the UPF0147 family.

The polypeptide is UPF0147 protein DKAM_0139 (Desulfurococcus amylolyticus (strain DSM 18924 / JCM 16383 / VKM B-2413 / 1221n) (Desulfurococcus kamchatkensis)).